The sequence spans 395 residues: Chaperone protein DnaJ 2 (395 aa).

Residues Asn-10–Lys-75 enclose the J domain. The CR-type zinc finger occupies Gly-165–Ser-242. Zn(2+) is bound by residues Cys-178, Cys-181, Cys-194, Cys-197, Cys-216, Cys-219, Cys-230, and Cys-233. 4 CXXCXGXG motif repeats span residues Cys-178–Gly-185, Cys-194–Gly-201, Cys-216–Gly-223, and Cys-230–Gly-237.

Belongs to the DnaJ family. In terms of assembly, homodimer. Zn(2+) is required as a cofactor.

Its subcellular location is the cytoplasm. Participates actively in the response to hyperosmotic and heat shock by preventing the aggregation of stress-denatured proteins and by disaggregating proteins, also in an autonomous, DnaK-independent fashion. Unfolded proteins bind initially to DnaJ; upon interaction with the DnaJ-bound protein, DnaK hydrolyzes its bound ATP, resulting in the formation of a stable complex. GrpE releases ADP from DnaK; ATP binding to DnaK triggers the release of the substrate protein, thus completing the reaction cycle. Several rounds of ATP-dependent interactions between DnaJ, DnaK and GrpE are required for fully efficient folding. Also involved, together with DnaK and GrpE, in the DNA replication of plasmids through activation of initiation proteins. This is Chaperone protein DnaJ 2 from Corynebacterium glutamicum (strain ATCC 13032 / DSM 20300 / JCM 1318 / BCRC 11384 / CCUG 27702 / LMG 3730 / NBRC 12168 / NCIMB 10025 / NRRL B-2784 / 534).